Here is a 309-residue protein sequence, read N- to C-terminus: Probable lipid kinase YegS-like (309 aa).

One can recognise a DAGKc domain in the interval 1-133 (MPLTHIRLLL…IDIIRANNNY (133 aa)). ATP contacts are provided by residues serine 39, 65-71 (GDGSLNE), and threonine 95. Positions 214, 217, and 219 each coordinate Mg(2+). Glutamate 273 serves as the catalytic Proton acceptor.

This sequence belongs to the diacylglycerol/lipid kinase family. YegS lipid kinase subfamily. Mg(2+) is required as a cofactor. The cofactor is Ca(2+).

It is found in the cytoplasm. Probably phosphorylates lipids; the in vivo substrate is unknown. This Shewanella frigidimarina (strain NCIMB 400) protein is Probable lipid kinase YegS-like.